The sequence spans 130 residues: Large ribosomal subunit protein bL17 (130 aa).

It belongs to the bacterial ribosomal protein bL17 family. In terms of assembly, part of the 50S ribosomal subunit. Contacts protein L32.

In Paraburkholderia xenovorans (strain LB400), this protein is Large ribosomal subunit protein bL17.